A 486-amino-acid polypeptide reads, in one-letter code: MRYFRPLSATAMTTVLLLAGTNVRAQPTEPTPASAHRPSISRGHYLAIAADCAACHTNGRDGQFLAGGYAISSPMGNIYSTNITPSKTHGIGNYTLEQFSKALRHGIRADGAQLYPAMPYDAYNRLTDEDVKSLYAYIMTEVKPVDAPSPKTQLPFPFSIRASLGIWKIAARIEGKPYVFDHTHNDDWNRGRYLVDELAHCGECHTPRNFLLAPNQSAYLAGADIGSWRAPNITNAPQSGIGSWSDQDLFQYLKTGKTAHARAAGPMAEAIEHSLQYLPDADISAIVTYLRSVPAKAESGQTVANFEHAGRPSSYSVANANSRRSNSTLTKTTDGAALYEAVCASCHQSDGKGSKDGYYPSLVGNTTTGQLNPNDLIASILYGVDRTTDNHEILMPAFGPDSLVQPLTDEQIATIADYVLSHFGNAQATVSADAVKQVRAGGKQVPLAKLASPGVMLLLGTGGILGAILVVAGLWWLISRRKKRSA.

Positions 1–25 (MRYFRPLSATAMTTVLLLAGTNVRA) are cleaved as a signal peptide. Cytochrome c domains lie at 38–142 (PSIS…MTEV), 186–294 (DDWN…RSVP), and 330–423 (TKTT…LSHF). Heme c-binding residues include Cys52, Cys55, His56, Cys201, Cys204, His205, Cys343, Cys346, and His347. The helical transmembrane segment at 458–478 (LLGTGGILGAILVVAGLWWLI) threads the bilayer.

In terms of assembly, heterotrimer composed of FdhL, FdhS and FdhC. In terms of processing, binds 3 heme c groups covalently per subunit.

It localises to the cell membrane. Cytochrome subunit of fructose dehydrogenase, an enzyme that catalyzes the oxidation of D-fructose to produce 5-keto-D-fructose. In the complex, mediates both the electron transfer to ubiquinone and the anchoring of the complex to the membrane. In Gluconobacter japonicus, this protein is Fructose dehydrogenase cytochrome subunit (fdhC).